The primary structure comprises 539 residues: MAKEIKFSEDARTKMLKGVDKLADTVKSTIGPKGRNVVLEQSYGSPTITNDGVTIAKAIELEDHFENMGAKLVSEVASKTNDIAGDGTTTATVLTQAIVNEGMKNVTAGANPVGIRRGIEKATSKAVEALHKMSHEVKTKDDIAQIASISSANPEVGKLIANAMEKVGNDGVITIEESRGVDTTLDVVEGMQFDRGYMSQYMVTDNDKMEANLDNPYILITDKKIGNIQDILPVLQSVVEQSRSLLIIADDITGEALPTLVLNKMRGTFNVVAVKAPGFGDRRKEQLEDIAILTGGTVITDDLGLNLKDVTIEQLGQSNKVTVTKDDTTIVEGAGSQEQIAERVGIIKQQISETTSDFDKEKLQERLAKLSGGVAVIRVGAATETELKEKKYRIEDALNATRAAVEEGFVPGGGTALANVISDLEDVEAEGDEATGVNIVRRALEEPVRQIAENAGEEGSVIVTKLKGQKPGVGYNAANDEWVDMVEAGIVDPTKVTRSALQNAASVSALLLTTEAVVADLPEDNPAPAAPAPGMGGMM.

Residues 29-32 (TIGP), 86-90 (DGTTT), Gly-413, 476-478 (NAA), and Asp-492 contribute to the ATP site.

This sequence belongs to the chaperonin (HSP60) family. Forms a cylinder of 14 subunits composed of two heptameric rings stacked back-to-back. Interacts with the co-chaperonin GroES.

The protein localises to the cytoplasm. The catalysed reaction is ATP + H2O + a folded polypeptide = ADP + phosphate + an unfolded polypeptide.. In terms of biological role, together with its co-chaperonin GroES, plays an essential role in assisting protein folding. The GroEL-GroES system forms a nano-cage that allows encapsulation of the non-native substrate proteins and provides a physical environment optimized to promote and accelerate protein folding. This Pediococcus pentosaceus (strain ATCC 25745 / CCUG 21536 / LMG 10740 / 183-1w) protein is Chaperonin GroEL.